We begin with the raw amino-acid sequence, 192 residues long: Fe/S biogenesis protein NfuA (192 aa).

[4Fe-4S] cluster-binding residues include C149 and C152.

The protein belongs to the NfuA family. Homodimer. The cofactor is [4Fe-4S] cluster.

Involved in iron-sulfur cluster biogenesis. Binds a 4Fe-4S cluster, can transfer this cluster to apoproteins, and thereby intervenes in the maturation of Fe/S proteins. Could also act as a scaffold/chaperone for damaged Fe/S proteins. This Shewanella halifaxensis (strain HAW-EB4) protein is Fe/S biogenesis protein NfuA.